Here is a 66-residue protein sequence, read N- to C-terminus: MPKMKTHRGAAKRLRVTASGKVKRFRAYKSHLLASKTPKQKRRLRHPALVDSTDRRRVARLLPYEA.

The protein belongs to the bacterial ribosomal protein bL35 family.

This chain is Large ribosomal subunit protein bL35, found in Moorella thermoacetica (strain ATCC 39073 / JCM 9320).